Consider the following 101-residue polypeptide: Large ribosomal subunit protein uL23 (101 aa).

The protein belongs to the universal ribosomal protein uL23 family. In terms of assembly, part of the 50S ribosomal subunit. Contacts protein L29, and trigger factor when it is bound to the ribosome.

Its function is as follows. One of the early assembly proteins it binds 23S rRNA. One of the proteins that surrounds the polypeptide exit tunnel on the outside of the ribosome. Forms the main docking site for trigger factor binding to the ribosome. In Mannheimia succiniciproducens (strain KCTC 0769BP / MBEL55E), this protein is Large ribosomal subunit protein uL23.